The primary structure comprises 125 residues: Small ribosomal subunit protein uS13 (125 aa).

Belongs to the universal ribosomal protein uS13 family. As to quaternary structure, part of the 30S ribosomal subunit. Forms a loose heterodimer with protein S19. Forms two bridges to the 50S subunit in the 70S ribosome.

Located at the top of the head of the 30S subunit, it contacts several helices of the 16S rRNA. In the 70S ribosome it contacts the 23S rRNA (bridge B1a) and protein L5 of the 50S subunit (bridge B1b), connecting the 2 subunits; these bridges are implicated in subunit movement. Contacts the tRNAs in the A and P-sites. The polypeptide is Small ribosomal subunit protein uS13 (Gluconacetobacter diazotrophicus (strain ATCC 49037 / DSM 5601 / CCUG 37298 / CIP 103539 / LMG 7603 / PAl5)).